Consider the following 450-residue polypeptide: Glucose-6-phosphate isomerase (450 aa).

Phosphothreonine is present on Thr39. Glu291 functions as the Proton donor in the catalytic mechanism. Active-site residues include His312 and Lys426.

It belongs to the GPI family.

It localises to the cytoplasm. It catalyses the reaction alpha-D-glucose 6-phosphate = beta-D-fructose 6-phosphate. Its pathway is carbohydrate biosynthesis; gluconeogenesis. The protein operates within carbohydrate degradation; glycolysis; D-glyceraldehyde 3-phosphate and glycerone phosphate from D-glucose: step 2/4. In terms of biological role, catalyzes the reversible isomerization of glucose-6-phosphate to fructose-6-phosphate. This is Glucose-6-phosphate isomerase from Bacillus thuringiensis (strain Al Hakam).